The sequence spans 245 residues: DNA polymerase sliding clamp 1 (245 aa).

The protein belongs to the PCNA family. The subunits circularize to form a toroid; DNA passes through its center. Replication factor C (RFC) is required to load the toroid on the DNA. Forms a dimeric complex with PCNA3 and a trimeric complex with PCNA2 and PCNA3; does not form homotrimers.

In terms of biological role, sliding clamp subunit that acts as a moving platform for DNA processing. Responsible for tethering the catalytic subunit of DNA polymerase and other proteins to DNA during high-speed replication. The trimeric complex inhibits DNA ligase and both 3'-5' and 5'-3' activity of Hel308 (Hjm) helicase, but stimulates Hjc, the Holliday junction cleavage enzyme. The sequence is that of DNA polymerase sliding clamp 1 from Sulfurisphaera tokodaii (strain DSM 16993 / JCM 10545 / NBRC 100140 / 7) (Sulfolobus tokodaii).